Here is a 428-residue protein sequence, read N- to C-terminus: GTPase Obg (428 aa).

The region spanning 1-158 (MFVDKVKVYA…RNLLLELKVL (158 aa)) is the Obg domain. In terms of domain architecture, OBG-type G spans 159-329 (ADVGLVGFPS…LMLAIADELE (171 aa)). Residues 165-172 (GFPSVGKS), 190-194 (FTTIT), 212-215 (DLPG), 282-285 (NKMD), and 310-312 (SAI) each bind GTP. Mg(2+) contacts are provided by Ser172 and Thr192. The OCT domain occupies 350-428 (KHELPIEPFT…IMKFEFEFVE (79 aa)).

Belongs to the TRAFAC class OBG-HflX-like GTPase superfamily. OBG GTPase family. As to quaternary structure, monomer. The cofactor is Mg(2+).

It is found in the cytoplasm. Functionally, an essential GTPase which binds GTP, GDP and possibly (p)ppGpp with moderate affinity, with high nucleotide exchange rates and a fairly low GTP hydrolysis rate. Plays a role in control of the cell cycle, stress response, ribosome biogenesis and in those bacteria that undergo differentiation, in morphogenesis control. The chain is GTPase Obg from Shouchella clausii (strain KSM-K16) (Alkalihalobacillus clausii).